Reading from the N-terminus, the 294-residue chain is tRNA dimethylallyltransferase (294 aa).

7–14 lines the ATP pocket; it reads GPTGSGKS. 9-14 is a substrate binding site; it reads TGSGKS.

It belongs to the IPP transferase family. In terms of assembly, monomer. Requires Mg(2+) as cofactor.

The catalysed reaction is adenosine(37) in tRNA + dimethylallyl diphosphate = N(6)-dimethylallyladenosine(37) in tRNA + diphosphate. In terms of biological role, catalyzes the transfer of a dimethylallyl group onto the adenine at position 37 in tRNAs that read codons beginning with uridine, leading to the formation of N6-(dimethylallyl)adenosine (i(6)A). The polypeptide is tRNA dimethylallyltransferase (Akkermansia muciniphila (strain ATCC BAA-835 / DSM 22959 / JCM 33894 / BCRC 81048 / CCUG 64013 / CIP 107961 / Muc)).